We begin with the raw amino-acid sequence, 266 residues long: HLA class II histocompatibility antigen, DRB1 beta chain (266 aa).

A signal peptide spans 1–29 (MVCLKLPGGSCMTALTVTLMVLSSPLALS). A beta-1 region spans residues 30–124 (GDTRPRFLWQ…VESFTVQRRV (95 aa)). The Extracellular portion of the chain corresponds to 30-227 (GDTRPRFLWQ…RARSESAQSK (198 aa)). A disulfide bridge connects residues cysteine 44 and cysteine 108. The N-linked (GlcNAc...) asparagine glycan is linked to asparagine 48. A peptide antigen is bound by residues aspartate 86, tryptophan 90, histidine 110, asparagine 111, and arginine 122. The tract at residues 125-227 (QPKVTVYPSK…RARSESAQSK (103 aa)) is beta-2. The region spanning 126–214 (PKVTVYPSKT…EHPSVTSPLT (89 aa)) is the Ig-like C1-type domain. Cysteine 146 and cysteine 202 form a disulfide bridge. A helical transmembrane segment spans residues 228-248 (MLSGVGGFVLGLLFLGAGLFI). Over 249-266 (YFRNQKGHSGLQPTGFLS) the chain is Cytoplasmic. A Glycyl lysine isopeptide (Lys-Gly) (interchain with G-Cter in ubiquitin) cross-link involves residue lysine 254.

In terms of assembly, heterotrimer that consists of an alpha chain HLA-DRA, a beta chain HLA-DRB1 and a peptide (peptide-MHCII). Newly synthesized alpha and beta chains forms a heterodimer (MHCII) that associates with the CD74/invariant chain (Ii) in the endoplasmic reticulum (ER). Ii is a trimer composed of three subunits and each subunit interacts with one MHCII dimer, blocking the peptide-binding cleft. As a result, MHCII molecules cannot bind peptides present in the ER. The complex of MHCII and CD74/Ii is transported in vesicles from ER to Golgi to lysosomes, where it encounters antigenic peptides generated via proteolysis of endocytosed antigens. MHCII dimers are dissociated from CD74/Ii by the combined action of proteolysis and HLA-DM. Lysosomal enzymes such as cathepsin, degrade CD74/Ii leaving a 24 amino acid remnant called class II-associated Ii or CLIP. Interacts (via the peptide binding cleft) with CLIP; this interaction inhibits antigen peptide binding before entry in the endosomal compartment. The displacement of CLIP and replacement by a high affinity peptide in lysosomes is performed by HLA-DM heterodimer. HLA-DM catalyzes CLIP dissociation from MHCII, stabilizes empty MHCII and mediates the selection of high affinity peptides. Interacts with HLA-DM heterodimer; this interaction is direct. Interacts with TCR (via CDR3). Interacts (via beta-2 domain) with CD4 coreceptor (via Ig-like V-type domain); this interaction is of exceptionally low affinity yet necessary for optimal recognition of antigenic peptides. (Microbial infection) Interacts with Staphylococcus aureus enterotoxin A/entA, enterotoxin B/entB, enterotoxin C1/entC1, enterotoxin D/entD and enterotoxin H/entH. Enterotoxins bind outside the peptide-binding cleft of MHCII: enterotoxin H/entH interacts via the beta-1 domain of MHCII and in a zinc-dependent way, whereas enterotoxin B/entB interacts primarily via the alpha-1 domain. As to quaternary structure, (Microbial infection) Interacts with Epstein-Barr virus gp42 protein. Post-translationally, ubiquitinated by MARCHF1 and MARCHF8 at Lys-254 leading to sorting into the endosome system and down-regulation of MHCII. As to expression, expressed in professional APCs: monocyte/macrophages, dendritic cells and B cells (at protein level). Expressed in thymic epithelial cells (at protein level).

The protein localises to the cell membrane. It is found in the endoplasmic reticulum membrane. The protein resides in the lysosome membrane. Its subcellular location is the late endosome membrane. It localises to the autolysosome membrane. A beta chain of antigen-presenting major histocompatibility complex class II (MHCII) molecule. In complex with the alpha chain HLA-DRA, displays antigenic peptides on professional antigen presenting cells (APCs) for recognition by alpha-beta T cell receptor (TCR) on HLA-DRB1-restricted CD4-positive T cells. This guides antigen-specific T-helper effector functions, both antibody-mediated immune response and macrophage activation, to ultimately eliminate the infectious agents and transformed cells. Typically presents extracellular peptide antigens of 10 to 30 amino acids that arise from proteolysis of endocytosed antigens in lysosomes. In the tumor microenvironment, presents antigenic peptides that are primarily generated in tumor-resident APCs likely via phagocytosis of apoptotic tumor cells or macropinocytosis of secreted tumor proteins. Presents peptides derived from intracellular proteins that are trapped in autolysosomes after macroautophagy, a mechanism especially relevant for T cell selection in the thymus and central immune tolerance. The selection of the immunodominant epitopes follows two processing modes: 'bind first, cut/trim later' for pathogen-derived antigenic peptides and 'cut first, bind later' for autoantigens/self-peptides. The anchor residue at position 1 of the peptide N-terminus, usually a large hydrophobic residue, is essential for high affinity interaction with MHCII molecules. In terms of biological role, allele DRB1*01:01: Displays an immunodominant epitope derived from Bacillus anthracis pagA/protective antigen, PA (KLPLYISNPNYKVNVYAVT), to both naive and PA-specific memory CD4-positive T cells. Presents immunodominant HIV-1 gag peptide (FRDYVDRFYKTLRAEQASQE) on infected dendritic cells for recognition by TRAV24-TRBV2 TCR on CD4-positive T cells and controls viral load. May present to T-helper 1 cells several HRV-16 epitopes derived from capsid proteins VP1 (PRFSLPFLSIASAYYMFYDG) and VP2 (PHQFINLRSNNSATLIVPYV), contributing to viral clearance. Displays commonly recognized peptides derived from IAV external protein HA (PKYVKQNTLKLAT and SNGNFIAPEYAYKIVK) and from internal proteins M, NP and PB1, with M-derived epitope (GLIYNRMGAVTTEV) being the most immunogenic. Presents a self-peptide derived from COL4A3 (GWISLWKGFSF) to TCR (TRAV14 biased) on CD4-positive, FOXP3-positive regulatory T cells and mediates immune tolerance to self. May present peptides derived from oncofetal trophoblast glycoprotein TPBG 5T4, known to be recognized by both T-helper 1 and regulatory T cells. Displays with low affinity a self-peptide derived from MBP (VHFFKNIVTPRTP). Its function is as follows. Allele DRB1*03:01: May present to T-helper 1 cells an HRV-16 epitope derived from capsid protein VP2 (NEKQPSDDNWLNFDGTLLGN), contributing to viral clearance. Displays self-peptides derived from retinal SAG (NRERRGIALDGKIKHE) and thyroid TG (LSSVVVDPSIRHFDV). Presents viral epitopes derived from HHV-6B gH/U48 and U85 antigens to polyfunctional CD4-positive T cells with cytotoxic activity implicated in control of HHV-6B infection. Presents several immunogenic epitopes derived from C.tetani neurotoxin tetX, playing a role in immune recognition and long-term protection. Functionally, allele DRB1*04:01: Presents an immunodominant bacterial epitope derived from M.tuberculosis esxB/culture filtrate antigen CFP-10 (EISTNIRQAGVQYSR), eliciting CD4-positive T cell effector functions such as IFNG production and cytotoxic activity. May present to T-helper 1 cells an HRV-16 epitope derived from capsid protein VP2 (NEKQPSDDNWLNFDGTLLGN), contributing to viral clearance. Presents tumor epitopes derived from melanoma-associated TYR antigen (QNILLSNAPLGPQFP and DYSYLQDSDPDSFQD), triggering CD4-positive T cell effector functions such as GMCSF production. Displays preferentially citrullinated self-peptides derived from VIM (GVYATR/citSSAVR and SAVRAR/citSSVPGVR) and ACAN (VVLLVATEGR/ CitVRVNSAYQDK). Displays self-peptides derived from COL2A1. Allele DRB1*04:02: Displays native or citrullinated self-peptides derived from VIM. In terms of biological role, allele DRB1*04:04: May present to T-helper 1 cells several HRV-16 epitopes derived from capsid proteins VP1 (HIVMQYMYVPPGAPIPTTRN) and VP2 (RGDSTITSQDVANAVVGYGV), contributing to viral clearance. Displays preferentially citrullinated self-peptides derived from VIM (SAVRAR/citSSVPGVR). Its function is as follows. Allele DRB1*04:05: May present to T-helper 1 cells an immunogenic epitope derived from tumor-associated antigen WT1 (KRYFKLSHLQMHSRKH), likely providing for effective antitumor immunity in a wide range of solid and hematological malignancies. Functionally, allele DRB1*05:01: Presents an immunodominant HIV-1 gag peptide (FRDYVDRFYKTLRAEQASQE) on infected dendritic cells for recognition by TRAV24-TRBV2 TCR on CD4-positive T cells and controls viral load. Allele DRB1*07:01: Upon EBV infection, presents latent antigen EBNA2 peptide (PRSPTVFYNIPPMPLPPSQL) to CD4-positive T cells, driving oligoclonal expansion and selection of a dominant virus-specific memory T cell subset with cytotoxic potential to directly eliminate virus-infected B cells. May present to T-helper 1 cells several HRV-16 epitopes derived from capsid proteins VP1 (PRFSLPFLSIASAYYMFYDG) and VP2 (VPYVNAVPMDSMVRHNNWSL), contributing to viral clearance. In the context of tumor immunesurveillance, may present to T-helper 1 cells an immunogenic epitope derived from tumor-associated antigen WT1 (MTEYKLVVVGAVGVGKSALTIQLI), likely providing for effective antitumor immunity in a wide range of solid and hematological malignancies. In metastatic epithelial tumors, presents to intratumoral CD4-positive T cells a KRAS neoantigen (MTEYKLVVVGAVGVGKSALTIQLI) carrying G12V hotspot driver mutation and may mediate tumor regression. In terms of biological role, allele DRB1*11:01: Displays an immunodominant HIV-1 gag peptide (FRDYVDRFYKTLRAEQASQE) on infected dendritic cells for recognition by TRAV24-TRBV2 TCR on CD4-positive T cells and controls viral load. May present to T-helper 1 cells an HRV-16 epitope derived from capsid protein VP2 (SDRIIQITRGDSTITSQDVA), contributing to viral clearance. Presents several immunogenic epitopes derived from C.tetani neurotoxin tetX, playing a role in immune recognition and longterm protection. In the context of tumor immunesurveillance, may present tumor-derived neoantigens to CD4-positive T cells and trigger anti-tumor helper functions. Its function is as follows. Allele DRB1*13:01: Presents viral epitopes derived from HHV-6B antigens to polyfunctional CD4-positive T cells implicated in control of HHV-6B infection. Functionally, allele DRB1*15:01: May present to T-helper 1 cells an HRV-16 epitope derived from capsid protein VP2 (SNNSATLIVPYVNAVPMDSM), contributing to viral clearance. Displays a self-peptide derived from MBP (ENPVVHFFKNIVTPR). May present to T-helper 1 cells an immunogenic epitope derived from tumor-associated antigen WT1 (KRYFKLSHLQMHSRKH), likely providing for effective antitumor immunity in a wide range of solid and hematological malignancies. Allele DRB1*15:02: Displays an immunodominant HIV-1 gag peptide (FRDYVDRFYKTLRAEQASQE) on infected dendritic cells for recognition by TRAV24-TRBV2 TCR on CD4-positive T cells and controls viral load. May present to T-helper 1 cells an immunogenic epitope derived from tumor-associated antigen WT1 (KRYFKLSHLQMHSRKH), likely providing for effective antitumor immunity in a wide range of solid and hematological malignancies. In terms of biological role, (Microbial infection) Acts as a receptor for Epstein-Barr virus on lymphocytes. The chain is HLA class II histocompatibility antigen, DRB1 beta chain from Homo sapiens (Human).